A 343-amino-acid chain; its full sequence is GTPase Obg (343 aa).

The region spanning 1–159 (MKFLDEAKVY…HWLWLRLKLI (159 aa)) is the Obg domain. The 168-residue stretch at 160-327 (ADAGLVGLPN…ALRALLAAMD (168 aa)) folds into the OBG-type G domain. GTP is bound by residues 166-173 (GLPNAGKS), 191-195 (FTTLH), 212-215 (DIPG), 279-282 (SKAD), and 308-310 (SAA). Positions 173 and 193 each coordinate Mg(2+).

This sequence belongs to the TRAFAC class OBG-HflX-like GTPase superfamily. OBG GTPase family. Monomer. It depends on Mg(2+) as a cofactor.

It is found in the cytoplasm. In terms of biological role, an essential GTPase which binds GTP, GDP and possibly (p)ppGpp with moderate affinity, with high nucleotide exchange rates and a fairly low GTP hydrolysis rate. Plays a role in control of the cell cycle, stress response, ribosome biogenesis and in those bacteria that undergo differentiation, in morphogenesis control. The polypeptide is GTPase Obg (Methylobacterium sp. (strain 4-46)).